The primary structure comprises 220 residues: uncharacterized protein (220 aa).

The first 25 residues, 1-25, serve as a signal peptide directing secretion; the sequence is MSCGTYKRGSLTFLLVVALAVPVFC.

As to expression, nacreous layer of shell (at protein level). Expressed primarily in the mantle with highest level in the mantle pallium and lower level in the mantle edge.

The protein resides in the secreted. This is an uncharacterized protein from Margaritifera margaritifera (Freshwater pearl mussel).